Reading from the N-terminus, the 336-residue chain is UPF0324 membrane protein PM1461 (336 aa).

10 helical membrane-spanning segments follow: residues 5–23 (TLFL…VNLL), 30–52 (LNAN…NTFY), 62–84 (GVIF…RLTL), 91–113 (GINA…LWLG), 123–140 (IVYL…AAIM), 153–175 (VSIA…PLMY), 221–238 (MIRV…SWLL), 250–271 (ISIP…FSLI), 275–297 (IVAW…LGLT), and 310–332 (PLIL…NVGI).

The protein belongs to the UPF0324 family.

It localises to the cell membrane. This is UPF0324 membrane protein PM1461 from Pasteurella multocida (strain Pm70).